The sequence spans 1630 residues: Separin (1630 aa).

Positions 1016 to 1037 are disordered; the sequence is SKHSTGLKLCDSPRSSSMTPRG. Residues 1443 to 1542 form the Peptidase C50 domain; that stretch reads EDNISMILNP…SAAMKYYGKL (100 aa). Cys-1531 is an active-site residue.

As to quaternary structure, may bind calcium. Interacts with PDS1. Interacts with MCD1.

It localises to the nucleus. It is found in the cytoplasm. The protein localises to the cytoskeleton. The protein resides in the microtubule organizing center. Its subcellular location is the spindle pole body. It carries out the reaction All bonds known to be hydrolyzed by this endopeptidase have arginine in P1 and an acidic residue in P4. P6 is often occupied by an acidic residue or by a hydroxy-amino-acid residue, the phosphorylation of which enhances cleavage.. It is inactivated via its interaction with PDS1, which probably covers its active site. PDS1 degradation at anaphase, liberates it and triggers MCD1 cleavage. In terms of biological role, caspase-like protease, which plays a central role in the chromosome segregation by cleaving the MCD1/SCC1 subunit of the cohesin complex at the onset of anaphase. During most of the cell cycle, it is inactivated by securin/PDS1 protein. It also promotes anaphase spindle elongation. A component of the FEAR (CDC14 early anaphase release) network which promotes CDC14 release from the nucleolus during early anaphase. Cleaves SLK19. This is Separin (ESP1) from Saccharomyces cerevisiae (strain ATCC 204508 / S288c) (Baker's yeast).